We begin with the raw amino-acid sequence, 214 residues long: Probable transaldolase (214 aa).

K83 (schiff-base intermediate with substrate) is an active-site residue.

It belongs to the transaldolase family. Type 3B subfamily.

It localises to the cytoplasm. It carries out the reaction D-sedoheptulose 7-phosphate + D-glyceraldehyde 3-phosphate = D-erythrose 4-phosphate + beta-D-fructose 6-phosphate. The protein operates within carbohydrate degradation; pentose phosphate pathway; D-glyceraldehyde 3-phosphate and beta-D-fructose 6-phosphate from D-ribose 5-phosphate and D-xylulose 5-phosphate (non-oxidative stage): step 2/3. In terms of biological role, transaldolase is important for the balance of metabolites in the pentose-phosphate pathway. This chain is Probable transaldolase, found in Geobacter sulfurreducens (strain ATCC 51573 / DSM 12127 / PCA).